The sequence spans 122 residues: MIQQESRLKVADNTGAKEILTIRVLGGSGRRYAGIGDTIVATVKDAIPGGNVKKGDVVKAVVVRTRKQSRRPDGSYIKFDENAAVILKTDGEPRGTRIFGPVGRELRDKKFMKIVSLAPEVI.

This sequence belongs to the universal ribosomal protein uL14 family. Part of the 50S ribosomal subunit. Forms a cluster with proteins L3 and L19. In the 70S ribosome, L14 and L19 interact and together make contacts with the 16S rRNA in bridges B5 and B8.

In terms of biological role, binds to 23S rRNA. Forms part of two intersubunit bridges in the 70S ribosome. The protein is Large ribosomal subunit protein uL14 of Micrococcus luteus (strain ATCC 4698 / DSM 20030 / JCM 1464 / CCM 169 / CCUG 5858 / IAM 1056 / NBRC 3333 / NCIMB 9278 / NCTC 2665 / VKM Ac-2230) (Micrococcus lysodeikticus).